Reading from the N-terminus, the 263-residue chain is Isoprenyl transferase (263 aa).

Asp-38 is a catalytic residue. Asp-38 is a Mg(2+) binding site. Residues 39-42, His-55, and 83-85 contribute to the substrate site; these read GNRR and STD. The Proton acceptor role is filled by Asn-86. Substrate-binding positions include Phe-87, Arg-89, Arg-212, and 218–220; that span reads RLS. A Mg(2+)-binding site is contributed by Glu-231.

This sequence belongs to the UPP synthase family. Homodimer. The cofactor is Mg(2+).

Its function is as follows. Catalyzes the condensation of isopentenyl diphosphate (IPP) with allylic pyrophosphates generating different type of terpenoids. This chain is Isoprenyl transferase, found in Thermus thermophilus (strain ATCC 27634 / DSM 579 / HB8).